We begin with the raw amino-acid sequence, 642 residues long: 1-deoxy-D-xylulose-5-phosphate synthase (642 aa).

Thiamine diphosphate is bound by residues histidine 73 and 114–116 (SHA). Aspartate 145 contacts Mg(2+). Thiamine diphosphate is bound by residues 146 to 147 (GA), asparagine 175, phenylalanine 286, and glutamate 367. Residue asparagine 175 coordinates Mg(2+).

This sequence belongs to the transketolase family. DXPS subfamily. Homodimer. It depends on Mg(2+) as a cofactor. Thiamine diphosphate serves as cofactor.

The enzyme catalyses D-glyceraldehyde 3-phosphate + pyruvate + H(+) = 1-deoxy-D-xylulose 5-phosphate + CO2. Its pathway is metabolic intermediate biosynthesis; 1-deoxy-D-xylulose 5-phosphate biosynthesis; 1-deoxy-D-xylulose 5-phosphate from D-glyceraldehyde 3-phosphate and pyruvate: step 1/1. Catalyzes the acyloin condensation reaction between C atoms 2 and 3 of pyruvate and glyceraldehyde 3-phosphate to yield 1-deoxy-D-xylulose-5-phosphate (DXP). This chain is 1-deoxy-D-xylulose-5-phosphate synthase, found in Saccharopolyspora erythraea (strain ATCC 11635 / DSM 40517 / JCM 4748 / NBRC 13426 / NCIMB 8594 / NRRL 2338).